The primary structure comprises 1058 residues: Outer capsid protein VP4 (1058 aa).

Belongs to the orthoreovirus lambda-2 protein family.

Its subcellular location is the virion. The enzyme catalyses a 5'-end diphospho-ribonucleoside in mRNA + GTP + H(+) = a 5'-end (5'-triphosphoguanosine)-ribonucleoside in mRNA + diphosphate. The catalysed reaction is a 5'-end (5'-triphosphoguanosine)-ribonucleoside in mRNA + S-adenosyl-L-methionine = a 5'-end (N(7)-methyl 5'-triphosphoguanosine)-ribonucleoside in mRNA + S-adenosyl-L-homocysteine. Functionally, outer capsid protein involved in mRNA capping. Catalyzes the last 3 enzymatic activities for formation of the 5' cap structure on the viral plus-strand transcripts, namely the RNA guanylyltransferase, RNA-7N- and RNA-2'O-methyltransferase activities. The polypeptide is Outer capsid protein VP4 (S4) (Lymantria dispar cypovirus 1 (isolate Rao) (LdCPV-1)).